A 202-amino-acid chain; its full sequence is MTRSHNHSATLTTPDFDQARAEAAVRELLIAVGEDPDREGLLDTPARVARSYREIFAGLYTDPDEVLTTMFDEQHDEMVLVKDIPMYSTCEHHLVSFHGVAHVGYIPGVDGRVTGLSKLARVVDLYAKRPQVQERLTSQIADALMRKLDPRGAIVVIEAEHLCMAMRGIRKPGAVTTTSAVRGQFKTDKASRAEALDLILRK.

Residues Cys-90, His-93, and Cys-163 each contribute to the Zn(2+) site.

This sequence belongs to the GTP cyclohydrolase I family. In terms of assembly, homomer.

The enzyme catalyses GTP + H2O = 7,8-dihydroneopterin 3'-triphosphate + formate + H(+). The protein operates within cofactor biosynthesis; 7,8-dihydroneopterin triphosphate biosynthesis; 7,8-dihydroneopterin triphosphate from GTP: step 1/1. This is GTP cyclohydrolase 1 from Mycolicibacterium gilvum (strain PYR-GCK) (Mycobacterium gilvum (strain PYR-GCK)).